Here is a 386-residue protein sequence, read N- to C-terminus: Flap endonuclease 1 (386 aa).

Positions 1–104 (MGILGLSKLI…GELAKRAERR (104 aa)) are N-domain. Asp34 contributes to the Mg(2+) binding site. Residues Arg47 and Arg70 each coordinate DNA. Mg(2+)-binding residues include Asp86, Glu158, Glu160, Asp179, and Asp181. The interval 122–253 (EIEKFNRRLV…KRAIELINNY (132 aa)) is I-domain. DNA is bound at residue Glu158. The DNA site is built by Gly231 and Asp233. Asp233 lines the Mg(2+) pocket. The tract at residues 336-344 (TQVRLDSFF) is interaction with PCNA. The segment at 354–386 (VNAAKRKAEEAKKSANNKKAKTSGGAARGRRPK) is disordered.

Belongs to the XPG/RAD2 endonuclease family. FEN1 subfamily. Interacts with PCNA. Three molecules of FEN1 bind to one PCNA trimer with each molecule binding to one PCNA monomer. PCNA stimulates the nuclease activity without altering cleavage specificity. It depends on Mg(2+) as a cofactor. Post-translationally, phosphorylated. Phosphorylation upon DNA damage induces relocalization to the nuclear plasma.

It localises to the nucleus. Its subcellular location is the nucleolus. The protein resides in the nucleoplasm. The protein localises to the mitochondrion. Its function is as follows. Structure-specific nuclease with 5'-flap endonuclease and 5'-3' exonuclease activities involved in DNA replication and repair. During DNA replication, cleaves the 5'-overhanging flap structure that is generated by displacement synthesis when DNA polymerase encounters the 5'-end of a downstream Okazaki fragment. It enters the flap from the 5'-end and then tracks to cleave the flap base, leaving a nick for ligation. Also involved in the long patch base excision repair (LP-BER) pathway, by cleaving within the apurinic/apyrimidinic (AP) site-terminated flap. Acts as a genome stabilization factor that prevents flaps from equilibrating into structures that lead to duplications and deletions. Also possesses 5'-3' exonuclease activity on nicked or gapped double-stranded DNA, and exhibits RNase H activity. Also involved in replication and repair of rDNA and in repairing mitochondrial DNA. This is Flap endonuclease 1 from Drosophila pseudoobscura pseudoobscura (Fruit fly).